The sequence spans 835 residues: Outer membrane usher protein FasD (835 aa).

The first 21 residues, 1–21 (MNKYPPLLTMLIIGIGSNAVA), serve as a signal peptide directing secretion. Residues Cys810 and Cys834 are joined by a disulfide bond.

Belongs to the fimbrial export usher family.

It is found in the cell outer membrane. Involved in the export and assembly of the 987P fimbriae subunits across the outer membrane. The sequence is that of Outer membrane usher protein FasD (fasD) from Escherichia coli.